Consider the following 132-residue polypeptide: Sec-independent protein translocase protein TatB (132 aa).

The chain crosses the membrane as a helical span at residues 2 to 22 (FDGIGFMELLLIGILGLVVLG). Polar residues-rich tracts occupy residues 86 to 95 (LKQAAQSVNR) and 116 to 132 (IAET…KNNG). The interval 86–132 (LKQAAQSVNRPYQLDESNEQEPKIAPPQANIAETPTQSGDTHSKNNG) is disordered.

The protein belongs to the TatB family. In terms of assembly, the Tat system comprises two distinct complexes: a TatABC complex, containing multiple copies of TatA, TatB and TatC subunits, and a separate TatA complex, containing only TatA subunits. Substrates initially bind to the TatABC complex, which probably triggers association of the separate TatA complex to form the active translocon.

Its subcellular location is the cell inner membrane. Its function is as follows. Part of the twin-arginine translocation (Tat) system that transports large folded proteins containing a characteristic twin-arginine motif in their signal peptide across membranes. Together with TatC, TatB is part of a receptor directly interacting with Tat signal peptides. TatB may form an oligomeric binding site that transiently accommodates folded Tat precursor proteins before their translocation. This Shewanella denitrificans (strain OS217 / ATCC BAA-1090 / DSM 15013) protein is Sec-independent protein translocase protein TatB.